Here is a 102-residue protein sequence, read N- to C-terminus: Pyrimidine/purine nucleoside phosphorylase (102 aa).

It belongs to the nucleoside phosphorylase PpnP family.

The catalysed reaction is a purine D-ribonucleoside + phosphate = a purine nucleobase + alpha-D-ribose 1-phosphate. It carries out the reaction adenosine + phosphate = alpha-D-ribose 1-phosphate + adenine. The enzyme catalyses cytidine + phosphate = cytosine + alpha-D-ribose 1-phosphate. It catalyses the reaction guanosine + phosphate = alpha-D-ribose 1-phosphate + guanine. The catalysed reaction is inosine + phosphate = alpha-D-ribose 1-phosphate + hypoxanthine. It carries out the reaction thymidine + phosphate = 2-deoxy-alpha-D-ribose 1-phosphate + thymine. The enzyme catalyses uridine + phosphate = alpha-D-ribose 1-phosphate + uracil. It catalyses the reaction xanthosine + phosphate = alpha-D-ribose 1-phosphate + xanthine. Its function is as follows. Catalyzes the phosphorolysis of diverse nucleosides, yielding D-ribose 1-phosphate and the respective free bases. Can use uridine, adenosine, guanosine, cytidine, thymidine, inosine and xanthosine as substrates. Also catalyzes the reverse reactions. The chain is Pyrimidine/purine nucleoside phosphorylase from Shewanella amazonensis (strain ATCC BAA-1098 / SB2B).